The following is a 123-amino-acid chain: Small ribosomal subunit protein uS12 (123 aa).

Positions 1-21 (MPTIEQLVRKGRQAKPKKSKT) are disordered. The span at 9–20 (RKGRQAKPKKSK) shows a compositional bias: basic residues. Position 89 is a 3-methylthioaspartic acid (Asp89).

It belongs to the universal ribosomal protein uS12 family. In terms of assembly, part of the 30S ribosomal subunit. Contacts proteins S8 and S17. May interact with IF1 in the 30S initiation complex.

Functionally, with S4 and S5 plays an important role in translational accuracy. In terms of biological role, interacts with and stabilizes bases of the 16S rRNA that are involved in tRNA selection in the A site and with the mRNA backbone. Located at the interface of the 30S and 50S subunits, it traverses the body of the 30S subunit contacting proteins on the other side and probably holding the rRNA structure together. The combined cluster of proteins S8, S12 and S17 appears to hold together the shoulder and platform of the 30S subunit. This Bifidobacterium longum subsp. infantis (strain ATCC 15697 / DSM 20088 / JCM 1222 / NCTC 11817 / S12) protein is Small ribosomal subunit protein uS12.